The sequence spans 561 residues: DNA ligase B (561 aa).

The N6-AMP-lysine intermediate role is filled by K125.

It belongs to the NAD-dependent DNA ligase family. LigB subfamily.

The enzyme catalyses NAD(+) + (deoxyribonucleotide)n-3'-hydroxyl + 5'-phospho-(deoxyribonucleotide)m = (deoxyribonucleotide)n+m + AMP + beta-nicotinamide D-nucleotide.. In terms of biological role, catalyzes the formation of phosphodiester linkages between 5'-phosphoryl and 3'-hydroxyl groups in double-stranded DNA using NAD as a coenzyme and as the energy source for the reaction. The sequence is that of DNA ligase B from Salmonella schwarzengrund (strain CVM19633).